Reading from the N-terminus, the 122-residue chain is uncharacterized protein (122 aa).

The next 2 helical transmembrane spans lie at 34-54 (IIFLTVGLLLFIAALALGVLV) and 91-111 (FVLAAFGFVCMVASFLYFVSF).

The protein localises to the cell membrane. This is an uncharacterized protein from Mycoplasma pneumoniae (strain ATCC 29342 / M129 / Subtype 1) (Mycoplasmoides pneumoniae).